A 252-amino-acid chain; its full sequence is 2-succinyl-6-hydroxy-2,4-cyclohexadiene-1-carboxylate synthase (252 aa).

It belongs to the AB hydrolase superfamily. MenH family. In terms of assembly, monomer.

The enzyme catalyses 5-enolpyruvoyl-6-hydroxy-2-succinyl-cyclohex-3-ene-1-carboxylate = (1R,6R)-6-hydroxy-2-succinyl-cyclohexa-2,4-diene-1-carboxylate + pyruvate. The protein operates within quinol/quinone metabolism; 1,4-dihydroxy-2-naphthoate biosynthesis; 1,4-dihydroxy-2-naphthoate from chorismate: step 3/7. It participates in quinol/quinone metabolism; menaquinone biosynthesis. Catalyzes a proton abstraction reaction that results in 2,5-elimination of pyruvate from 2-succinyl-5-enolpyruvyl-6-hydroxy-3-cyclohexene-1-carboxylate (SEPHCHC) and the formation of 2-succinyl-6-hydroxy-2,4-cyclohexadiene-1-carboxylate (SHCHC). This chain is 2-succinyl-6-hydroxy-2,4-cyclohexadiene-1-carboxylate synthase, found in Salmonella heidelberg (strain SL476).